The primary structure comprises 540 residues: Methionine--tRNA ligase 1 (540 aa).

The 'HIGH' region motif lies at 10–20 (PYANGSLHLGH). Cysteine 141, cysteine 144, cysteine 153, and cysteine 156 together coordinate Zn(2+). The 'KMSKS' region motif lies at 327–331 (KISTS). Threonine 330 contributes to the ATP binding site.

It belongs to the class-I aminoacyl-tRNA synthetase family. MetG type 1 subfamily. Monomer. The cofactor is Zn(2+).

The protein localises to the cytoplasm. It catalyses the reaction tRNA(Met) + L-methionine + ATP = L-methionyl-tRNA(Met) + AMP + diphosphate. Is required not only for elongation of protein synthesis but also for the initiation of all mRNA translation through initiator tRNA(fMet) aminoacylation. The chain is Methionine--tRNA ligase 1 from Alkaliphilus oremlandii (strain OhILAs) (Clostridium oremlandii (strain OhILAs)).